The sequence spans 92 residues: Small ribosomal subunit protein uS19c (92 aa).

The protein belongs to the universal ribosomal protein uS19 family.

The protein resides in the plastid. It is found in the chloroplast. Its function is as follows. Protein S19 forms a complex with S13 that binds strongly to the 16S ribosomal RNA. This chain is Small ribosomal subunit protein uS19c, found in Nicotiana sylvestris (Wood tobacco).